The primary structure comprises 248 residues: UPF0328 protein ECU06_0030/ECU06_1690/ECU11_0020 (248 aa).

2 disordered regions span residues Met1–Arg34 and Ala51–Asp81. 2 stretches are compositionally biased toward polar residues: residues Pro10–Ser19 and Gln61–Ser76.

The protein belongs to the UPF0328 family.

This chain is UPF0328 protein ECU06_0030/ECU06_1690/ECU11_0020, found in Encephalitozoon cuniculi (strain GB-M1) (Microsporidian parasite).